Consider the following 113-residue polypeptide: uncharacterized protein (113 aa).

2 consecutive transmembrane segments (helical) span residues 1–21 and 48–68; these read MLIA…FGTW and IMLA…ALIV.

The protein to M.tuberculosis Rv0039.

The protein resides in the cell membrane. This is an uncharacterized protein from Mycobacterium leprae (strain TN).